A 201-amino-acid polypeptide reads, in one-letter code: Dephospho-CoA kinase (201 aa).

A DPCK domain is found at 3–201 (IIGLTGGMAA…ALLHRLREAS (199 aa)). Residue 11 to 16 (AAGKST) participates in ATP binding.

This sequence belongs to the CoaE family.

It localises to the cytoplasm. The catalysed reaction is 3'-dephospho-CoA + ATP = ADP + CoA + H(+). It functions in the pathway cofactor biosynthesis; coenzyme A biosynthesis; CoA from (R)-pantothenate: step 5/5. Catalyzes the phosphorylation of the 3'-hydroxyl group of dephosphocoenzyme A to form coenzyme A. The protein is Dephospho-CoA kinase of Gluconobacter oxydans (strain 621H) (Gluconobacter suboxydans).